The primary structure comprises 791 residues: MATRSVSMKQTSQRAASPNKTQGAKKWSAVAARGSKIAQSATNDHRNVESIKVVPENRVRGGVAAKATDSSSNVTSLASSEENVSSVSGSAKSNNSQQRVWKTDVAISAEKRTETRQRELRRWMPDPEDAGVPLAGLEESTDNVEWDQFATNEKLFGVKSHFDEDLYTSRIDRSHPKYKEKEQEADRIAKEIEGTVTNNIHIAEERGLKVDDSGLDEEDLYSGVHRSIDVVRNYTRSNAYNKNNKDQKPKNHEAPHQHPQQKVVPPDDPAIVSHRHLALPRAPGPDSRAAERFFNARRKAGPLSRREKEGQIKEFMQFSQSLKIGSLDSKQPSSTKSVAEVKVADEKQLPDASSQATPADSKEPRKEEAEKPVTSATEVSSEKVEKVDGNTSSPSKEEEKPSTEPEKPSVVTQRKETTGTKLGTKLNAKAISFKPNVAAPVFTPGKFTIPSKPAPVNASRPMMPQQSNNSEASIPSTTPQSPSVVSNGENKPSSSPVFFNGPVSSEKEPILDNFNVFKNVGEEHQGAEQIDKPFSCPPTWNTGPNSLQQTIANSRPEGNSGSAKKAAAANPMIPSIVLPNSAMPSAMPMYPTPTMPYIPVGYPVPGYTPYMRNPSQHTSVAPSPNGTPTSGNSSTVGSPMIGYMAPQFIPPYAMPQFPPSGNGRGASAPATYFVPQMGGMMAYTMNGVPPMYGQYAPNNGMMNMHYPMYGDSRRSNSQRSFNSSNGKRSNVHKNNNASNTFSHSNASTSSSLNAAPNTTAKSSSQTAPPVSKGDATEKTEKDASANQEAKP.

Polar residues predominate over residues 1 to 22 (MATRSVSMKQTSQRAASPNKTQ). 8 disordered regions span residues 1–28 (MATRSVSMKQTSQRAASPNKTQGAKKWS), 60–100 (RGGV…QQRV), 112–134 (RTETRQRELRRWMPDPEDAGVPL), 235–311 (TRSN…KEGQ), 326–423 (SLDS…TKLG), 452–505 (KPAP…PVSS), 613–634 (NPSQHTSVAPSPNGTPTSGNSS), and 707–791 (PMYG…EAKP). Positions 76–96 (SLASSEENVSSVSGSAKSNNS) are enriched in low complexity. Composition is skewed to basic and acidic residues over residues 112–125 (RTETRQRELRRWMP) and 243–256 (NNKDQKPKNHEAPH). Residues 326–337 (SLDSKQPSSTKS) are compositionally biased toward polar residues. 2 stretches are compositionally biased toward basic and acidic residues: residues 360 to 371 (DSKEPRKEEAEK) and 395 to 418 (SKEEEKPSTEPEKPSVVTQRKETT). Over residues 473 to 486 (SIPSTTPQSPSVVS) the composition is skewed to low complexity. Residues 487-497 (NGENKPSSSPV) are compositionally biased toward polar residues. Composition is skewed to low complexity over residues 715–725 (SNSQRSFNSSN) and 734–760 (NNNASNTFSHSNASTSSSLNAAPNTTA). The segment covering 774–791 (DATEKTEKDASANQEAKP) has biased composition (basic and acidic residues).

It belongs to the ataxin-2 family. As to quaternary structure, interacts with mkt1.

The protein localises to the cytoplasm. Involved in post-transcriptional regulation of gene expression, probably by association with mkt1. This chain is Ataxin-2 homolog, found in Schizosaccharomyces pombe (strain 972 / ATCC 24843) (Fission yeast).